Consider the following 364-residue polypeptide: L-carnitine dehydrogenase (364 aa).

Residue 11-16 participates in NAD(+) binding; that stretch reads GGGVIG. Residues 336–364 are disordered; sequence KPAASTAAEKAKASKPVKKAEKPKKKKKG. A compositionally biased stretch (basic residues) spans 348-364; the sequence is ASKPVKKAEKPKKKKKG.

The protein belongs to the 3-hydroxyacyl-CoA dehydrogenase family. L-carnitine dehydrogenase subfamily. In terms of assembly, homodimer.

The protein resides in the cytoplasm. The enzyme catalyses carnitine + NAD(+) = 3-dehydrocarnitine + NADH + H(+). The protein operates within amine and polyamine metabolism; carnitine metabolism. In terms of biological role, catalyzes the NAD(+)-dependent oxidation of L-carnitine to 3-dehydrocarnitine. The chain is L-carnitine dehydrogenase from Mesorhizobium japonicum (strain LMG 29417 / CECT 9101 / MAFF 303099) (Mesorhizobium loti (strain MAFF 303099)).